A 482-amino-acid chain; its full sequence is Glutamate--tRNA ligase (482 aa).

Residues 9–19 (PSPTGPLHIGG) carry the 'HIGH' region motif. A 'KMSKS' region motif is present at residues 250 to 254 (KMSKR). Position 253 (Lys253) interacts with ATP.

This sequence belongs to the class-I aminoacyl-tRNA synthetase family. Glutamate--tRNA ligase type 1 subfamily. As to quaternary structure, monomer.

Its subcellular location is the cytoplasm. The enzyme catalyses tRNA(Glu) + L-glutamate + ATP = L-glutamyl-tRNA(Glu) + AMP + diphosphate. Catalyzes the attachment of glutamate to tRNA(Glu) in a two-step reaction: glutamate is first activated by ATP to form Glu-AMP and then transferred to the acceptor end of tRNA(Glu). The protein is Glutamate--tRNA ligase of Desulforamulus reducens (strain ATCC BAA-1160 / DSM 100696 / MI-1) (Desulfotomaculum reducens).